Consider the following 1481-residue polypeptide: Structural protein ORF147 (1481 aa).

2 disordered regions span residues 65–88 (AEKR…ENLE) and 1319–1403 (DEKL…PPIP). Low complexity-rich tracts occupy residues 73 to 84 (KGSQKKSNSSSS), 1323 to 1336 (SSTV…SPKT), and 1393 to 1403 (SSRTTITPPIP).

It localises to the virion. The sequence is that of Structural protein ORF147 from Noctuidae (owlet moths).